We begin with the raw amino-acid sequence, 471 residues long: Proline--tRNA ligase 2 (471 aa).

The protein belongs to the class-II aminoacyl-tRNA synthetase family. ProS type 3 subfamily. In terms of assembly, homodimer.

The protein localises to the cytoplasm. The enzyme catalyses tRNA(Pro) + L-proline + ATP = L-prolyl-tRNA(Pro) + AMP + diphosphate. In terms of biological role, catalyzes the attachment of proline to tRNA(Pro) in a two-step reaction: proline is first activated by ATP to form Pro-AMP and then transferred to the acceptor end of tRNA(Pro). This Streptomyces avermitilis (strain ATCC 31267 / DSM 46492 / JCM 5070 / NBRC 14893 / NCIMB 12804 / NRRL 8165 / MA-4680) protein is Proline--tRNA ligase 2.